Here is an 87-residue protein sequence, read N- to C-terminus: Asparagine--tRNA ligase, cytoplasmic (87 aa).

It belongs to the class-II aminoacyl-tRNA synthetase family.

Its subcellular location is the cytoplasm. The catalysed reaction is tRNA(Asn) + L-asparagine + ATP = L-asparaginyl-tRNA(Asn) + AMP + diphosphate + H(+). This Saccharomyces paradoxus (Yeast) protein is Asparagine--tRNA ligase, cytoplasmic (DED81).